We begin with the raw amino-acid sequence, 163 residues long: 3-hydroxyacyl-[acyl-carrier-protein] dehydratase FabZ (163 aa).

Residue H58 is part of the active site.

The protein belongs to the thioester dehydratase family. FabZ subfamily.

It localises to the cytoplasm. The enzyme catalyses a (3R)-hydroxyacyl-[ACP] = a (2E)-enoyl-[ACP] + H2O. Involved in unsaturated fatty acids biosynthesis. Catalyzes the dehydration of short chain beta-hydroxyacyl-ACPs and long chain saturated and unsaturated beta-hydroxyacyl-ACPs. In Francisella philomiragia subsp. philomiragia (strain ATCC 25017 / CCUG 19701 / FSC 153 / O#319-036), this protein is 3-hydroxyacyl-[acyl-carrier-protein] dehydratase FabZ.